The chain runs to 565 residues: Molybdenum cofactor biosynthesis protein 1 (565 aa).

The molybdenum cofactor biosynthesis protein A stretch occupies residues leucine 3–alanine 367. The region spanning serine 64–aspartate 276 is the Radical SAM core domain. Residue arginine 73 participates in GTP binding. Cysteine 80 and cysteine 84 together coordinate [4Fe-4S] cluster. Residue tyrosine 86 participates in S-adenosyl-L-methionine binding. A [4Fe-4S] cluster-binding site is contributed by cysteine 87. Arginine 123 is a GTP binding site. Glycine 127 contributes to the S-adenosyl-L-methionine binding site. Residue threonine 154 coordinates GTP. Position 178 (serine 178) interacts with S-adenosyl-L-methionine. Lysine 214 is a GTP binding site. Residue methionine 248 coordinates S-adenosyl-L-methionine. The [4Fe-4S] cluster site is built by cysteine 311 and cysteine 314. Arginine 316–arginine 318 contributes to the GTP binding site. Cysteine 328 is a binding site for [4Fe-4S] cluster. The active-site For molybdenum cofactor biosynthesis protein C activity is the aspartate 525.

This sequence in the C-terminal section; belongs to the MoaC family. The protein in the N-terminal section; belongs to the radical SAM superfamily. MoaA family. In terms of assembly, isoform Mocs1a and isoform Mocs1b probably form a heterooligomer. The cofactor is [4Fe-4S] cluster.

It catalyses the reaction GTP + AH2 + S-adenosyl-L-methionine = (8S)-3',8-cyclo-7,8-dihydroguanosine 5'-triphosphate + 5'-deoxyadenosine + L-methionine + A + H(+). The enzyme catalyses (8S)-3',8-cyclo-7,8-dihydroguanosine 5'-triphosphate = cyclic pyranopterin phosphate + diphosphate. The protein operates within cofactor biosynthesis; molybdopterin biosynthesis. Its function is as follows. Isoform Mocs1a and isoform Mocs1b probably form a complex that catalyzes the conversion of 5'-GTP to cyclic pyranopterin monophosphate (cPMP). Mocs1a catalyzes the cyclization of GTP to (8S)-3',8-cyclo-7,8-dihydroguanosine 5'-triphosphate and Mocs1b catalyzes the subsequent conversion of (8S)-3',8-cyclo-7,8-dihydroguanosine 5'-triphosphate to cPMP. The sequence is that of Molybdenum cofactor biosynthesis protein 1 (Mocs1) from Drosophila melanogaster (Fruit fly).